Consider the following 494-residue polypeptide: Glycerol kinase (494 aa).

Position 13 (T13) interacts with ADP. ATP-binding residues include T13, T14, and S15. T13 provides a ligand contact to sn-glycerol 3-phosphate. R17 is a binding site for ADP. Residues R83, E84, Y135, and D244 each contribute to the sn-glycerol 3-phosphate site. Positions 83, 84, 135, 244, and 245 each coordinate glycerol. ADP-binding residues include T266 and G309. Positions 266, 309, 313, and 410 each coordinate ATP. Residues G410 and N414 each coordinate ADP.

Belongs to the FGGY kinase family.

It catalyses the reaction glycerol + ATP = sn-glycerol 3-phosphate + ADP + H(+). It functions in the pathway polyol metabolism; glycerol degradation via glycerol kinase pathway; sn-glycerol 3-phosphate from glycerol: step 1/1. Inhibited by fructose 1,6-bisphosphate (FBP). In terms of biological role, key enzyme in the regulation of glycerol uptake and metabolism. Catalyzes the phosphorylation of glycerol to yield sn-glycerol 3-phosphate. In Shewanella sp. (strain ANA-3), this protein is Glycerol kinase.